The chain runs to 469 residues: Glutamate--tRNA ligase 1 (469 aa).

The short motif at 10–20 (PSPTGYLHVGG) is the 'HIGH' region element. Residues 252–256 (KLSKR) carry the 'KMSKS' region motif. Lys255 serves as a coordination point for ATP.

It belongs to the class-I aminoacyl-tRNA synthetase family. Glutamate--tRNA ligase type 1 subfamily. In terms of assembly, monomer.

The protein localises to the cytoplasm. It carries out the reaction tRNA(Glu) + L-glutamate + ATP = L-glutamyl-tRNA(Glu) + AMP + diphosphate. Its function is as follows. Catalyzes the attachment of glutamate to tRNA(Glu) in a two-step reaction: glutamate is first activated by ATP to form Glu-AMP and then transferred to the acceptor end of tRNA(Glu). The chain is Glutamate--tRNA ligase 1 from Fervidobacterium nodosum (strain ATCC 35602 / DSM 5306 / Rt17-B1).